The following is a 409-amino-acid chain: MKLKQRVVLLAILLVIFIFTKVFLIDNLDTSAANREDQRAFHRMMTGLRVELAPKLDHTLQSPWEIAAQWVVPREVYPEETPELGAVMHAMATKKIIKADVGYKGTQLKALLILEGGQKVVFKPKRYSRDHVVEGEPYAGYDRHNAEVAAFHLDRILGFHRAPLVVGRFVNLRTEIKPVATEQLLSTFLTVGNNTCFYGKCYYCRETEPACADGDIMEGSVTLWLPDVWPLQKHRHPWGRTYREGKLARWEYDESYCDAVKKTSPYDSGPRLLDIIDTAVFDYLIGNADRHHYESFQDDEGASMLILLDNAKSFGNPSLDERSILAPLYQCCIIRVSTWNRLNYLKNGVLKSALKSAMAHDPISPVLSDPHLDAVDQRLLSVLATVKQCTDQFGMDTVLVEDRMPLSHL.

Residues 1–6 lie on the Cytoplasmic side of the membrane; the sequence is MKLKQR. The chain crosses the membrane as a helical; Signal-anchor for type II membrane protein span at residues 7–25; that stretch reads VVLLAILLVIFIFTKVFLI. The Lumenal portion of the chain corresponds to 26–409; sequence DNLDTSAANR…VEDRMPLSHL (384 aa). ATP is bound by residues glutamine 107 and lysine 123. Aspartate 142 lines the Mn(2+) pocket. Asparagine 193 carries an N-linked (GlcNAc...) asparagine glycan. Cystine bridges form between cysteine 196-cysteine 211 and cysteine 201-cysteine 204. Residue 222 to 225 coordinates ATP; it reads TLWL. Cystine bridges form between cysteine 257–cysteine 331 and cysteine 332–cysteine 389. Residue aspartate 289 is part of the active site. Glutamate 294 and aspartate 309 together coordinate ATP. Aspartate 309 is a Mn(2+) binding site.

Belongs to the FAM20 family. Mn(2+) serves as cofactor. In terms of tissue distribution, widely expressed. Strongly expressed in pancreas, spleen and fetal liver.

The protein localises to the golgi apparatus membrane. It catalyses the reaction 3-O-(beta-D-galactosyl-(1-&gt;3)-beta-D-galactosyl-(1-&gt;4)-beta-D-xylosyl)-L-seryl-[protein] + ATP = 3-O-(beta-D-galactosyl-(1-&gt;3)-beta-D-galactosyl-(1-&gt;4)-beta-D-2-O-phosphoxylosyl)-L-seryl-[protein] + ADP + H(+). Its function is as follows. Responsible for the 2-O-phosphorylation of xylose in the glycosaminoglycan-protein linkage region of proteoglycans thereby regulating the amount of mature GAG chains. Sulfated glycosaminoglycans (GAGs), including heparan sulfate and chondroitin sulfate, are synthesized on the so-called common GAG-protein linkage region (GlcUAbeta1-3Galbeta1-3Galbeta1-4Xylbeta1-O-Ser) of core proteins, which is formed by the stepwise addition of monosaccharide residues by the respective specific glycosyltransferases. Xylose 2-O-phosphorylation may influence the catalytic activity of B3GAT3 (GlcAT-I) which completes the precursor tetrasaccharide of GAG-protein linkage regions on which the repeating disaccharide region is synthesized. In Homo sapiens (Human), this protein is Glycosaminoglycan xylosylkinase.